The sequence spans 433 residues: Basic 7S globulin 2 (433 aa).

The first 24 residues, 1 to 24, serve as a signal peptide directing secretion; the sequence is MASILHYFLALSLSFSFLFFLSDS. Residues 54 to 413 enclose the Peptidase A1 domain; sequence HWANLQKRTP…DLARSRVGFS (360 aa).

This sequence belongs to the peptidase A1 family. In terms of assembly, the mature protein consists of high- and low-kDa subunits linked by disulfide bonds.

Functionally, seed storage protein. Has a protein kinase activity. Binds leginsulin. The chain is Basic 7S globulin 2 from Glycine max (Soybean).